The chain runs to 409 residues: Argininosuccinate synthase (409 aa).

ATP-binding positions include 15-23 (AYSGGLDTS) and alanine 42. The L-citrulline site is built by tyrosine 93 and serine 98. An ATP-binding site is contributed by glycine 123. 3 residues coordinate L-aspartate: threonine 125, asparagine 129, and aspartate 130. Asparagine 129 contributes to the L-citrulline binding site. L-citrulline-binding residues include arginine 133, serine 182, serine 191, glutamate 267, and tyrosine 279.

This sequence belongs to the argininosuccinate synthase family. Type 1 subfamily. In terms of assembly, homotetramer.

The protein localises to the cytoplasm. It catalyses the reaction L-citrulline + L-aspartate + ATP = 2-(N(omega)-L-arginino)succinate + AMP + diphosphate + H(+). It participates in amino-acid biosynthesis; L-arginine biosynthesis; L-arginine from L-ornithine and carbamoyl phosphate: step 2/3. The polypeptide is Argininosuccinate synthase (Desulfitobacterium hafniense (strain Y51)).